Consider the following 278-residue polypeptide: Large ribosomal subunit protein uL2 (278 aa).

Disordered regions lie at residues 29-53 and 221-278; these read PVKS…TSRG and RGVA…KKKR. A compositionally biased stretch (basic residues) spans 269-278; sequence IRSRHAKKKR.

The protein belongs to the universal ribosomal protein uL2 family. As to quaternary structure, part of the 50S ribosomal subunit. Forms a bridge to the 30S subunit in the 70S ribosome.

Its function is as follows. One of the primary rRNA binding proteins. Required for association of the 30S and 50S subunits to form the 70S ribosome, for tRNA binding and peptide bond formation. It has been suggested to have peptidyltransferase activity; this is somewhat controversial. Makes several contacts with the 16S rRNA in the 70S ribosome. In Erythrobacter litoralis (strain HTCC2594), this protein is Large ribosomal subunit protein uL2.